The following is a 983-amino-acid chain: Probable beta-galactosidase C (983 aa).

The signal sequence occupies residues 1–23 (MRIFSFLFLLLLGILTGQGLVSG). The substrate site is built by tyrosine 82, asparagine 127, alanine 128, glutamate 129, and asparagine 187. The active-site Proton donor is glutamate 188. Asparagine 197 carries N-linked (GlcNAc...) asparagine glycosylation. Residue tyrosine 251 coordinates substrate. A disulfide bond links cysteine 257 and cysteine 304. Asparagine 276 carries an N-linked (GlcNAc...) asparagine glycan. Residue glutamate 287 is the Nucleophile of the active site. Tyrosine 353 serves as a coordination point for substrate. 10 N-linked (GlcNAc...) asparagine glycosylation sites follow: asparagine 391, asparagine 434, asparagine 466, asparagine 516, asparagine 601, asparagine 676, asparagine 714, asparagine 719, asparagine 758, and asparagine 804.

The protein belongs to the glycosyl hydrolase 35 family.

Its subcellular location is the secreted. It catalyses the reaction Hydrolysis of terminal non-reducing beta-D-galactose residues in beta-D-galactosides.. Functionally, cleaves beta-linked terminal galactosyl residues from gangliosides, glycoproteins, and glycosaminoglycans. This chain is Probable beta-galactosidase C (lacC), found in Aspergillus fumigatus (strain CBS 144.89 / FGSC A1163 / CEA10) (Neosartorya fumigata).